Reading from the N-terminus, the 440-residue chain is Tumor necrosis factor receptor superfamily member 10B (440 aa).

2 disordered regions span residues 1 to 32 (MEQRGQNAPAASGARKRHGPGPREARGARPGP) and 60 to 84 (DLAPQQRAAPQQKRSSPSEGLCPPG). Positions 1-55 (MEQRGQNAPAASGARKRHGPGPREARGARPGPRVPKTLVLVVAAVLLLVSAESAL) are cleaved as a signal peptide. The Extracellular segment spans residues 56 to 210 (ITQQDLAPQQ…SPGTPASPCS (155 aa)). TNFR-Cys repeat units lie at residues 57 to 94 (TQQDLAPQQRAAPQQKRSSPSEGLCPPGHHISEDGRDC), 97 to 137 (CKYG…NTVC), and 138 to 178 (QCEE…DIEC). Residues 60–71 (DLAPQQRAAPQQ) show a composition bias toward low complexity. Intrachain disulfides connect C81–C94, C97–C113, C116–C129, C119–C137, C139–C153, C156–C170, and C160–C178. The TAPE repeat unit spans residues 192 to 206 (PAVEETVTSSPGTPA). A helical transmembrane segment spans residues 211-231 (LSGIIIGVTVAAVVLIVAVFV). Residues 232–440 (CKSLLWKKVL…LEGNADSAMS (209 aa)) are Cytoplasmic-facing. One can recognise a Death domain in the interval 339-422 (RQCFDDFADL…LAKQKIEDHL (84 aa)).

Monomer. Can interact with TRADD and RIPK1. Interacts with HCMV protein UL141; this interaction prevents TNFRSF10B cell surface expression. Two TNFRSF10B monomers interact with a UL141 homodimer. Three TNFRSF10B molecules interact with TNFSF10 homotrimer. In the absence of stimulation, interacts with BIRC2, DDX3X and GSK3B. The interaction with BIRC2 and DDX3X is further enhanced upon receptor stimulation and accompanied by DDX3X and BIRC2 cleavage. Post-translationally, (Microbial infection) Glycosylated on Arg residue by S.typhimurium protein Ssek3. As to expression, widely expressed in adult and fetal tissues; very highly expressed in tumor cell lines such as HeLaS3, K-562, HL-60, SW480, A-549 and G-361; highly expressed in heart, peripheral blood lymphocytes, liver, pancreas, spleen, thymus, prostate, ovary, uterus, placenta, testis, esophagus, stomach and throughout the intestinal tract; not detectable in brain.

It localises to the membrane. In terms of biological role, receptor for the cytotoxic ligand TNFSF10/TRAIL. The adapter molecule FADD recruits caspase-8 to the activated receptor. The resulting death-inducing signaling complex (DISC) performs caspase-8 proteolytic activation which initiates the subsequent cascade of caspases (aspartate-specific cysteine proteases) mediating apoptosis. Promotes the activation of NF-kappa-B. Essential for ER stress-induced apoptosis. The polypeptide is Tumor necrosis factor receptor superfamily member 10B (TNFRSF10B) (Homo sapiens (Human)).